Here is a 455-residue protein sequence, read N- to C-terminus: Kynurenine 3-monooxygenase (455 aa).

The protein belongs to the aromatic-ring hydroxylase family. KMO subfamily. Requires FAD as cofactor.

The catalysed reaction is L-kynurenine + NADPH + O2 + H(+) = 3-hydroxy-L-kynurenine + NADP(+) + H2O. Its pathway is cofactor biosynthesis; NAD(+) biosynthesis; quinolinate from L-kynurenine: step 1/3. In terms of biological role, catalyzes the hydroxylation of L-kynurenine (L-Kyn) to form 3-hydroxy-L-kynurenine (L-3OHKyn). Required for synthesis of quinolinic acid. The polypeptide is Kynurenine 3-monooxygenase (Xanthomonas euvesicatoria pv. vesicatoria (strain 85-10) (Xanthomonas campestris pv. vesicatoria)).